Consider the following 350-residue polypeptide: Fe(3+) ions import ATP-binding protein FbpC (350 aa).

One can recognise an ABC transporter domain in the interval L4–L236. G36–T43 is an ATP binding site.

This sequence belongs to the ABC transporter superfamily. Fe(3+) ion importer (TC 3.A.1.10) family. As to quaternary structure, the complex is composed of two ATP-binding proteins (FbpC), two transmembrane proteins (FbpB) and a solute-binding protein (FbpA).

Its subcellular location is the cell inner membrane. It carries out the reaction Fe(3+)(out) + ATP + H2O = Fe(3+)(in) + ADP + phosphate + H(+). Its function is as follows. Part of the ABC transporter complex FbpABC involved in Fe(3+) ions import. Responsible for energy coupling to the transport system. This chain is Fe(3+) ions import ATP-binding protein FbpC, found in Pseudomonas fluorescens (strain Pf0-1).